Here is a 355-residue protein sequence, read N- to C-terminus: Methionine import ATP-binding protein MetN (355 aa).

Residues L8 to I250 form the ABC transporter domain. G42–S49 contacts ATP.

The protein belongs to the ABC transporter superfamily. Methionine importer (TC 3.A.1.24) family. In terms of assembly, the complex is composed of two ATP-binding proteins (MetN), two transmembrane proteins (MetI) and a solute-binding protein (MetQ).

The protein localises to the cell membrane. The enzyme catalyses L-methionine(out) + ATP + H2O = L-methionine(in) + ADP + phosphate + H(+). It carries out the reaction D-methionine(out) + ATP + H2O = D-methionine(in) + ADP + phosphate + H(+). Functionally, part of the ABC transporter complex MetNIQ involved in methionine import. Responsible for energy coupling to the transport system. The polypeptide is Methionine import ATP-binding protein MetN (Streptococcus thermophilus (strain CNRZ 1066)).